Reading from the N-terminus, the 282-residue chain is Phosphatidylglycerol--prolipoprotein diacylglyceryl transferase (282 aa).

The next 3 helical transmembrane spans lie at 18-38, 55-75, and 89-109; these read LSIK…YFIA, VIFY…VIFQ, and IWHG…TGII. Arg-137 lines the a 1,2-diacyl-sn-glycero-3-phospho-(1'-sn-glycerol) pocket. 2 helical membrane passes run 203-223 and 235-255; these read VGET…FVEG and IRVA…ILIY.

It belongs to the Lgt family.

Its subcellular location is the cell membrane. It carries out the reaction L-cysteinyl-[prolipoprotein] + a 1,2-diacyl-sn-glycero-3-phospho-(1'-sn-glycerol) = an S-1,2-diacyl-sn-glyceryl-L-cysteinyl-[prolipoprotein] + sn-glycerol 1-phosphate + H(+). It participates in protein modification; lipoprotein biosynthesis (diacylglyceryl transfer). Its function is as follows. Catalyzes the transfer of the diacylglyceryl group from phosphatidylglycerol to the sulfhydryl group of the N-terminal cysteine of a prolipoprotein, the first step in the formation of mature lipoproteins. The protein is Phosphatidylglycerol--prolipoprotein diacylglyceryl transferase of Staphylococcus haemolyticus (strain JCSC1435).